The following is a 407-amino-acid chain: Protein trichome birefringence-like 12 (407 aa).

The helical; Signal-anchor for type II membrane protein transmembrane segment at 21–41 threads the bilayer; that stretch reads SLLPRILLLSLLLLLFYSLIL. The GDS motif signature appears at 130-132; it reads GDS. A DCXHWCLPGXXDXWN motif motif is present at residues 379–393; sequence DCMHWCLPGVPDTWV.

It belongs to the PC-esterase family. TBL subfamily.

It is found in the membrane. Functionally, may act as a bridging protein that binds pectin and other cell wall polysaccharides. Probably involved in maintaining esterification of pectins. May be involved in the specific O-acetylation of cell wall polymers. This Arabidopsis thaliana (Mouse-ear cress) protein is Protein trichome birefringence-like 12 (TBL12).